We begin with the raw amino-acid sequence, 122 residues long: Small ribosomal subunit protein uS8c (122 aa).

Belongs to the universal ribosomal protein uS8 family. In terms of assembly, part of the 30S ribosomal subunit.

It localises to the plastid. The protein resides in the chloroplast. Its function is as follows. One of the primary rRNA binding proteins, it binds directly to 16S rRNA central domain where it helps coordinate assembly of the platform of the 30S subunit. The polypeptide is Small ribosomal subunit protein uS8c (rps8) (Ostreococcus tauri).